The following is a 1415-amino-acid chain: DNA-directed RNA polymerase subunit beta' (1415 aa).

Zn(2+) is bound by residues Cys-72, Cys-74, Cys-87, and Cys-90. Mg(2+) contacts are provided by Asp-463, Asp-465, and Asp-467. Zn(2+) is bound by residues Cys-811, Cys-885, Cys-892, and Cys-895.

This sequence belongs to the RNA polymerase beta' chain family. The RNAP catalytic core consists of 2 alpha, 1 beta, 1 beta' and 1 omega subunit. When a sigma factor is associated with the core the holoenzyme is formed, which can initiate transcription. It depends on Mg(2+) as a cofactor. Zn(2+) is required as a cofactor.

It carries out the reaction RNA(n) + a ribonucleoside 5'-triphosphate = RNA(n+1) + diphosphate. Functionally, DNA-dependent RNA polymerase catalyzes the transcription of DNA into RNA using the four ribonucleoside triphosphates as substrates. The chain is DNA-directed RNA polymerase subunit beta' from Cereibacter sphaeroides (strain ATCC 17025 / ATH 2.4.3) (Rhodobacter sphaeroides).